Reading from the N-terminus, the 119-residue chain is Beta-2-microglobulin (119 aa).

A signal peptide spans M1–A20. The Ig-like C1-type domain occupies P25 to K114. The cysteines at positions 45 and 100 are disulfide-linked.

The protein belongs to the beta-2-microglobulin family. As to quaternary structure, heterodimer of an alpha chain and a beta chain. Beta-2-microglobulin is the beta-chain of major histocompatibility complex class I molecules.

The protein resides in the secreted. Functionally, component of the class I major histocompatibility complex (MHC). Involved in the presentation of peptide antigens to the immune system. This Chlorocebus aethiops (Green monkey) protein is Beta-2-microglobulin (B2M).